A 116-amino-acid polypeptide reads, in one-letter code: Endoribonuclease EndoA (116 aa).

This sequence belongs to the PemK/MazF family. Homodimer. Forms a complex with antitoxin EndoAI in which the toxin activity is inhibited. One dimer binds a ssRNA substrate, forms a heterohexamer composed of alternating toxin and antitoxin homodimers which inhibits the endoribonuclease activity. Antitoxin prevents RNA binding to the endoribonuclease.

Its function is as follows. Toxic component of a type II toxin-antitoxin (TA) system. Specific for 5'-UACAU-3' sequences, cleaving after the first U. Yields cleavage products with 3' phosphate and 5' hydroxyl groups. Cannot digest substrate with a UUdUACAUAA cleavage site. Overexpression is toxic for cell growth (shown in E.coli), probably by inhibiting protein synthesis through the cleavage of single-stranded RNA. The toxicity is reversed by the antitoxin EndoAI. Toxin activity cannot be inhibited by MazE from E.coli. The EndoA-EndoAI complex does not seem to bind its own promoter. The chain is Endoribonuclease EndoA from Bacillus subtilis (strain 168).